The primary structure comprises 316 residues: tRNA dimethylallyltransferase (316 aa).

Residue 17-24 coordinates ATP; it reads GPTASGKT. A substrate-binding site is contributed by 19–24; it reads TASGKT. 4 interaction with substrate tRNA regions span residues 42–45, 166–170, 247–252, and 280–287; these read DSAL, QRLSR, RCVGYR, and KRQITWLR.

The protein belongs to the IPP transferase family. In terms of assembly, monomer. It depends on Mg(2+) as a cofactor.

The enzyme catalyses adenosine(37) in tRNA + dimethylallyl diphosphate = N(6)-dimethylallyladenosine(37) in tRNA + diphosphate. Catalyzes the transfer of a dimethylallyl group onto the adenine at position 37 in tRNAs that read codons beginning with uridine, leading to the formation of N6-(dimethylallyl)adenosine (i(6)A). The chain is tRNA dimethylallyltransferase from Escherichia coli O127:H6 (strain E2348/69 / EPEC).